A 206-amino-acid polypeptide reads, in one-letter code: Small ribosomal subunit protein uS4 (206 aa).

In terms of domain architecture, S4 RNA-binding spans 94 to 157 (RRLDNVVYRL…RSRTYFKNLV (64 aa)).

The protein belongs to the universal ribosomal protein uS4 family. In terms of assembly, part of the 30S ribosomal subunit. Contacts protein S5. The interaction surface between S4 and S5 is involved in control of translational fidelity.

One of the primary rRNA binding proteins, it binds directly to 16S rRNA where it nucleates assembly of the body of the 30S subunit. In terms of biological role, with S5 and S12 plays an important role in translational accuracy. This chain is Small ribosomal subunit protein uS4, found in Chloroflexus aurantiacus (strain ATCC 29364 / DSM 637 / Y-400-fl).